The primary structure comprises 106 residues: MGPVLVWNISDLIGMNFTCLKGLATLFKTGASIGISLGAGAECSTIIACNLGSWFFKISLAIVQRLPLGMQCRICSFRNARQGGNIPELALIIICTFIYFLYFSLF.

Helical transmembrane passes span 43 to 63 (CSTIIACNLGSWFFKISLAIV) and 86 to 106 (IPELALIIICTFIYFLYFSLF).

It is found in the membrane. This is an uncharacterized protein from Saccharomyces cerevisiae (strain ATCC 204508 / S288c) (Baker's yeast).